A 132-amino-acid polypeptide reads, in one-letter code: MIIIIKIRINIHIIILTIIIIKGTINLRMSIVNQNKIHITKKQGIIMMMMMMMKILKEIKNLFDLDIMVIHIGMIKFNLVEIVQKVAVIQKVHISHYILEQIDMVDEMIIHDFKHVDDPMVIVKICFLTFLM.

Functionally, FS800 is likely to have some function in the production or maintenance of the schistosome egg. It may have a function unrelated to eggshell formation. In Schistosoma mansoni (Blood fluke), this protein is Female-specific protein 800.